The following is a 250-amino-acid chain: 4-hydroxy-tetrahydrodipicolinate reductase (250 aa).

NAD(+) contacts are provided by residues glycine 10 to isoleucine 15, glycine 78 to threonine 80, and alanine 105 to phenylalanine 108. Histidine 135 (proton donor/acceptor) is an active-site residue. A (S)-2,3,4,5-tetrahydrodipicolinate-binding site is contributed by histidine 136. Lysine 139 (proton donor) is an active-site residue. A (S)-2,3,4,5-tetrahydrodipicolinate-binding site is contributed by glycine 145 to threonine 146.

This sequence belongs to the DapB family.

Its subcellular location is the cytoplasm. It carries out the reaction (S)-2,3,4,5-tetrahydrodipicolinate + NAD(+) + H2O = (2S,4S)-4-hydroxy-2,3,4,5-tetrahydrodipicolinate + NADH + H(+). It catalyses the reaction (S)-2,3,4,5-tetrahydrodipicolinate + NADP(+) + H2O = (2S,4S)-4-hydroxy-2,3,4,5-tetrahydrodipicolinate + NADPH + H(+). Its pathway is amino-acid biosynthesis; L-lysine biosynthesis via DAP pathway; (S)-tetrahydrodipicolinate from L-aspartate: step 4/4. In terms of biological role, catalyzes the conversion of 4-hydroxy-tetrahydrodipicolinate (HTPA) to tetrahydrodipicolinate. The chain is 4-hydroxy-tetrahydrodipicolinate reductase from Streptomyces coelicolor (strain ATCC BAA-471 / A3(2) / M145).